A 315-amino-acid chain; its full sequence is Lipoyl synthase (315 aa).

[4Fe-4S] cluster is bound by residues Cys62, Cys67, Cys73, Cys88, Cys92, Cys95, and Ser302. The region spanning 74 to 291 (FGKGTATFMI…ETEALRMGFR (218 aa)) is the Radical SAM core domain.

It belongs to the radical SAM superfamily. Lipoyl synthase family. [4Fe-4S] cluster is required as a cofactor.

The protein localises to the cytoplasm. It carries out the reaction [[Fe-S] cluster scaffold protein carrying a second [4Fe-4S](2+) cluster] + N(6)-octanoyl-L-lysyl-[protein] + 2 oxidized [2Fe-2S]-[ferredoxin] + 2 S-adenosyl-L-methionine + 4 H(+) = [[Fe-S] cluster scaffold protein] + N(6)-[(R)-dihydrolipoyl]-L-lysyl-[protein] + 4 Fe(3+) + 2 hydrogen sulfide + 2 5'-deoxyadenosine + 2 L-methionine + 2 reduced [2Fe-2S]-[ferredoxin]. It participates in protein modification; protein lipoylation via endogenous pathway; protein N(6)-(lipoyl)lysine from octanoyl-[acyl-carrier-protein]: step 2/2. In terms of biological role, catalyzes the radical-mediated insertion of two sulfur atoms into the C-6 and C-8 positions of the octanoyl moiety bound to the lipoyl domains of lipoate-dependent enzymes, thereby converting the octanoylated domains into lipoylated derivatives. The chain is Lipoyl synthase from Azoarcus sp. (strain BH72).